Here is a 475-residue protein sequence, read N- to C-terminus: UDP-N-acetylmuramate--L-alanine ligase (475 aa).

Glycine 125–threonine 131 provides a ligand contact to ATP.

It belongs to the MurCDEF family.

The protein resides in the cytoplasm. The catalysed reaction is UDP-N-acetyl-alpha-D-muramate + L-alanine + ATP = UDP-N-acetyl-alpha-D-muramoyl-L-alanine + ADP + phosphate + H(+). It participates in cell wall biogenesis; peptidoglycan biosynthesis. Functionally, cell wall formation. The protein is UDP-N-acetylmuramate--L-alanine ligase of Haemophilus influenzae (strain PittGG).